The chain runs to 217 residues: Putative thymidylate synthase (217 aa).

Residue Cys139 is part of the active site.

It belongs to the thymidylate synthase family. Archaeal-type ThyA subfamily. In terms of assembly, monomer.

It is found in the cytoplasm. It participates in pyrimidine metabolism; dTTP biosynthesis. Its function is as follows. May catalyze the biosynthesis of dTMP using an unknown cosubstrate. This Methanosarcina barkeri (strain Fusaro / DSM 804) protein is Putative thymidylate synthase.